Here is a 147-residue protein sequence, read N- to C-terminus: Hemoglobin subunit beta (147 aa).

N-acetylvaline is present on Val-2. The 145-residue stretch at 3-147 (HLSAEEKEAV…VANALAHKYH (145 aa)) folds into the Globin domain. Phosphoserine is present on Ser-45. The residue at position 60 (Lys-60) is an N6-acetyllysine. His-64 contacts heme b. Position 83 is an N6-acetyllysine (Lys-83). His-93 serves as a coordination point for heme b. Residue Cys-94 is modified to S-nitrosocysteine. Residue Lys-145 is modified to N6-acetyllysine.

It belongs to the globin family. As to quaternary structure, heterotetramer of two alpha chains and two beta chains. As to expression, red blood cells.

Functionally, involved in oxygen transport from the lung to the various peripheral tissues. This Sus scrofa (Pig) protein is Hemoglobin subunit beta (HBB).